A 349-amino-acid polypeptide reads, in one-letter code: Mannonate dehydratase (349 aa).

It belongs to the mannonate dehydratase family. The cofactor is Fe(2+). It depends on Mn(2+) as a cofactor.

The enzyme catalyses D-mannonate = 2-dehydro-3-deoxy-D-gluconate + H2O. The protein operates within carbohydrate metabolism; pentose and glucuronate interconversion. In terms of biological role, catalyzes the dehydration of D-mannonate. This is Mannonate dehydratase from Oceanobacillus iheyensis (strain DSM 14371 / CIP 107618 / JCM 11309 / KCTC 3954 / HTE831).